The chain runs to 207 residues: Cilia- and flagella-associated protein 418 (207 aa).

The segment at 1 to 75 is required for interaction with FAM161A; sequence MAEDLDELLD…LINEIFEEPH (75 aa).

In terms of assembly, interacts (via N-terminus) with FAM161A (via central region); the interaction is direct. As to expression, expressed in the retina (at protein level).

The protein localises to the cytoplasm. Its subcellular location is the photoreceptor inner segment. In terms of biological role, may be involved in photoreceptor outer segment disk morphogenesis. In Bos taurus (Bovine), this protein is Cilia- and flagella-associated protein 418 (CFAP418).